A 306-amino-acid polypeptide reads, in one-letter code: Pantothenate kinase (306 aa).

91 to 98 (GSVAVGKS) serves as a coordination point for ATP.

The protein belongs to the prokaryotic pantothenate kinase family.

The protein resides in the cytoplasm. The enzyme catalyses (R)-pantothenate + ATP = (R)-4'-phosphopantothenate + ADP + H(+). It participates in cofactor biosynthesis; coenzyme A biosynthesis; CoA from (R)-pantothenate: step 1/5. The sequence is that of Pantothenate kinase from Streptococcus pneumoniae (strain 70585).